Here is a 417-residue protein sequence, read N- to C-terminus: Serine--tRNA ligase (417 aa).

Thr-232–Glu-234 serves as a coordination point for L-serine. Arg-263–Glu-265 provides a ligand contact to ATP. Glu-286 provides a ligand contact to L-serine. An ATP-binding site is contributed by Glu-350–Ser-353. Ser-385 serves as a coordination point for L-serine.

This sequence belongs to the class-II aminoacyl-tRNA synthetase family. Type-1 seryl-tRNA synthetase subfamily. Homodimer. The tRNA molecule binds across the dimer.

It is found in the cytoplasm. It catalyses the reaction tRNA(Ser) + L-serine + ATP = L-seryl-tRNA(Ser) + AMP + diphosphate + H(+). The enzyme catalyses tRNA(Sec) + L-serine + ATP = L-seryl-tRNA(Sec) + AMP + diphosphate + H(+). The protein operates within aminoacyl-tRNA biosynthesis; selenocysteinyl-tRNA(Sec) biosynthesis; L-seryl-tRNA(Sec) from L-serine and tRNA(Sec): step 1/1. Its function is as follows. Catalyzes the attachment of serine to tRNA(Ser). Is also able to aminoacylate tRNA(Sec) with serine, to form the misacylated tRNA L-seryl-tRNA(Sec), which will be further converted into selenocysteinyl-tRNA(Sec). The sequence is that of Serine--tRNA ligase from Sulfurihydrogenibium sp. (strain YO3AOP1).